We begin with the raw amino-acid sequence, 196 residues long: ATP-dependent Clp protease proteolytic subunit (196 aa).

The Nucleophile role is filled by Ser-101. His-126 is a catalytic residue.

Belongs to the peptidase S14 family. In terms of assembly, component of the chloroplastic Clp protease core complex.

It localises to the plastid. The protein localises to the chloroplast stroma. It carries out the reaction Hydrolysis of proteins to small peptides in the presence of ATP and magnesium. alpha-casein is the usual test substrate. In the absence of ATP, only oligopeptides shorter than five residues are hydrolyzed (such as succinyl-Leu-Tyr-|-NHMec, and Leu-Tyr-Leu-|-Tyr-Trp, in which cleavage of the -Tyr-|-Leu- and -Tyr-|-Trp bonds also occurs).. Its function is as follows. Cleaves peptides in various proteins in a process that requires ATP hydrolysis. Has a chymotrypsin-like activity. Plays a major role in the degradation of misfolded proteins. The chain is ATP-dependent Clp protease proteolytic subunit from Lactuca sativa (Garden lettuce).